The primary structure comprises 252 residues: MAQRYDRAVTIYSPDGHLLQVEYAQEAVRRGSTVMGLRTNNAIVIGVEKRSVGDLQEERMVRKICMLDDHVVMTFSGLTADARILVSRAQMEAQSHRLNFEKPTTVEYITRYIAQLKQNYTQSNGRRPFGLSCLVGGFDEDGTPHLFQTDPSGIFYEWRANTTGRSSQPVRDYMEKHADEILTIADEAAAIKHIVRTLVSVSSLNHTQMEVAVLKYRQPLRMIDHQVLADLERTVRREIEDEAEASRRPRAP.

This sequence belongs to the peptidase T1A family. The 26S proteasome consists of a 20S proteasome core and two 19S regulatory subunits. The 20S proteasome core is composed of 28 subunits that are arranged in four stacked rings, resulting in a barrel-shaped structure. The two end rings are each formed by seven alpha subunits, and the two central rings are each formed by seven beta subunits. The catalytic chamber with the active sites is on the inside of the barrel. Testis specific.

The protein localises to the cytoplasm. Its subcellular location is the nucleus. The proteasome is a multicatalytic proteinase complex which is characterized by its ability to cleave peptides with Arg, Phe, Tyr, Leu, and Glu adjacent to the leaving group at neutral or slightly basic pH. The proteasome has an ATP-dependent proteolytic activity. The chain is Proteasome subunit alpha type-7-1B (Prosalpha4T2) from Drosophila melanogaster (Fruit fly).